The primary structure comprises 608 residues: Albumin 1 (608 aa).

An N-terminal signal peptide occupies residues 1–14 (MQWLSVCSLLVLLS). Residues 15–18 (VLSR) constitute a propeptide that is removed on maturation. Albumin domains are found at residues 19-205 (SQAQ…TFQH), 206-398 (AVMK…AGSD), and 402-600 (KITD…KLVS). Disulfide bonds link Cys-26/Cys-72, Cys-71/Cys-80, Cys-93/Cys-108, Cys-107/Cys-118, Cys-142/Cys-187, Cys-186/Cys-195, Cys-218/Cys-264, Cys-263/Cys-271, Cys-283/Cys-299, Cys-298/Cys-309, Cys-336/Cys-381, Cys-380/Cys-389, Cys-414/Cys-460, Cys-459/Cys-471, Cys-484/Cys-500, Cys-499/Cys-510, Cys-537/Cys-582, and Cys-581/Cys-590. N-linked (GlcNAc...) asparagine glycosylation occurs at Asn-501.

It belongs to the ALB/AFP/VDB family. As to expression, plasma.

The protein localises to the secreted. Functionally, binds water, Ca(2+), Na(+), K(+), fatty acids, hormones, bilirubin and drugs. Its main function is the regulation of the colloidal osmotic pressure of blood. The polypeptide is Albumin 1 (alb1) (Salmo salar (Atlantic salmon)).